A 623-amino-acid polypeptide reads, in one-letter code: uncharacterized protein (623 aa).

Residues 256–351 adopt a coiled-coil conformation; that stretch reads AEEKLLSKNK…EEIHGLKKKN (96 aa). Disordered regions lie at residues 417-485 and 497-536; these read NRRN…SPSS and ALSS…ECAT. The span at 422 to 431 shows a compositional bias: polar residues; that stretch reads LESVPFNTLS. The segment covering 452–481 has biased composition (basic and acidic residues); it reads ELKKPAESYGDETKKPNQHNKDGSIDEKPK.

This is an uncharacterized protein from Arabidopsis thaliana (Mouse-ear cress).